The primary structure comprises 77 residues: Coiled-coil-helix-coiled-coil-helix domain-containing protein C550.01c (77 aa).

The CHCH domain maps to 24–65 (KGGCVEEHLRLNDCYWDTHDWRKCTEQMEEFRKCWEKRHGPL). Short sequence motifs (cx9C motif) lie at residues 27–37 (CVEEHLRLNDC) and 47–57 (CTEQMEEFRKC). Intrachain disulfides connect Cys-27-Cys-57 and Cys-37-Cys-47.

The protein localises to the cytoplasm. Its subcellular location is the nucleus. In Schizosaccharomyces pombe (strain 972 / ATCC 24843) (Fission yeast), this protein is Coiled-coil-helix-coiled-coil-helix domain-containing protein C550.01c.